The following is a 147-amino-acid chain: 3-dehydroquinate dehydratase (147 aa).

Tyr23 acts as the Proton acceptor in catalysis. Positions 74, 80, and 87 each coordinate substrate. The active-site Proton donor is the His100. Residues 101 to 102 and Arg111 contribute to the substrate site; that span reads LS.

Belongs to the type-II 3-dehydroquinase family. In terms of assembly, homododecamer.

The enzyme catalyses 3-dehydroquinate = 3-dehydroshikimate + H2O. It participates in metabolic intermediate biosynthesis; chorismate biosynthesis; chorismate from D-erythrose 4-phosphate and phosphoenolpyruvate: step 3/7. Functionally, catalyzes a trans-dehydration via an enolate intermediate. The protein is 3-dehydroquinate dehydratase of Clostridium botulinum (strain Loch Maree / Type A3).